The primary structure comprises 1390 residues: DNA-directed RNA polymerase subunit beta (1390 aa).

The protein belongs to the RNA polymerase beta chain family. As to quaternary structure, the RNAP catalytic core consists of 2 alpha, 1 beta, 1 beta' and 1 omega subunit. When a sigma factor is associated with the core the holoenzyme is formed, which can initiate transcription.

It carries out the reaction RNA(n) + a ribonucleoside 5'-triphosphate = RNA(n+1) + diphosphate. In terms of biological role, DNA-dependent RNA polymerase catalyzes the transcription of DNA into RNA using the four ribonucleoside triphosphates as substrates. The sequence is that of DNA-directed RNA polymerase subunit beta from Chromobacterium violaceum (strain ATCC 12472 / DSM 30191 / JCM 1249 / CCUG 213 / NBRC 12614 / NCIMB 9131 / NCTC 9757 / MK).